The following is a 572-amino-acid chain: Squalene synthase (572 aa).

Helical transmembrane passes span 316 to 336 and 492 to 512; these read SVFN…ELMF and FFLI…LITW.

It belongs to the phytoene/squalene synthase family. In terms of assembly, monomer. Mg(2+) serves as cofactor.

The protein localises to the endoplasmic reticulum membrane. It catalyses the reaction 2 (2E,6E)-farnesyl diphosphate + NADPH + H(+) = squalene + 2 diphosphate + NADP(+). The catalysed reaction is 2 (2E,6E)-farnesyl diphosphate + NADH + H(+) = squalene + 2 diphosphate + NAD(+). It functions in the pathway terpene metabolism; lanosterol biosynthesis; lanosterol from farnesyl diphosphate: step 1/3. Catalyzes the condensation of 2 two farnesyl pyrophosphate moieties to form squalene. It is the first committed enzyme of the sterol biosynthesis pathway. Required for the biosynthesis of ergosterol. In Mycosarcoma maydis (Corn smut fungus), this protein is Squalene synthase (ERG9).